The sequence spans 445 residues: C4-dicarboxylate transport protein (445 aa).

Transmembrane regions (helical) follow at residues 24–44 (VLYVQVLFAIVVGVLVGWLSP), 62–82 (LIKMVIAPIIFCTVVSGIAHI), 105–125 (FALVLGLIVGNLFPVGHGLAA), 163–183 (GDILQVLLFAVLFGFALMALG), 201–221 (FGVIAIVMKAAPIGAFGAMAF), 234–254 (LIGLVALFYATSALFVVLVLG), 322–342 (IYMTLATLFIAQALGIELSFG), and 370–390 (AGTLAAVNPALVPGMAIVFSI).

This sequence belongs to the dicarboxylate/amino acid:cation symporter (DAACS) (TC 2.A.23) family.

It is found in the cell inner membrane. Functionally, responsible for the transport of dicarboxylates such as succinate, fumarate, and malate from the periplasm across the membrane. This Rhodopseudomonas palustris (strain ATCC BAA-98 / CGA009) protein is C4-dicarboxylate transport protein.